The sequence spans 603 residues: Elongation factor 4 (603 aa).

The 183-residue stretch at 5-187 (RHIRNFCIIA…AVVNFVPPPK (183 aa)) folds into the tr-type G domain. GTP contacts are provided by residues 17-22 (DHGKST) and 134-137 (NKID).

It belongs to the TRAFAC class translation factor GTPase superfamily. Classic translation factor GTPase family. LepA subfamily.

The protein localises to the cell membrane. The catalysed reaction is GTP + H2O = GDP + phosphate + H(+). Its function is as follows. Required for accurate and efficient protein synthesis under certain stress conditions. May act as a fidelity factor of the translation reaction, by catalyzing a one-codon backward translocation of tRNAs on improperly translocated ribosomes. Back-translocation proceeds from a post-translocation (POST) complex to a pre-translocation (PRE) complex, thus giving elongation factor G a second chance to translocate the tRNAs correctly. Binds to ribosomes in a GTP-dependent manner. This chain is Elongation factor 4, found in Symbiobacterium thermophilum (strain DSM 24528 / JCM 14929 / IAM 14863 / T).